A 504-amino-acid polypeptide reads, in one-letter code: Hexose transporter 1 (504 aa).

Over 1–29 the chain is Cytoplasmic; it reads MTKSSKDICSENEGKKNGKSGFFSTSFKY. The helical transmembrane segment at 30 to 50 threads the bilayer; sequence VLSACIASFIFGYQVSVLNTI. Topologically, residues 51–78 are extracellular; that stretch reads KNFIVVEFEWCKGEKDRLNCSNNTIQSS. C61 and C70 are oxidised to a cystine. Residues 79–99 form a helical membrane-spanning segment; the sequence is FLLASVFIGAVLGCGFSGYLV. Over 100 to 104 the chain is Cytoplasmic; sequence QFGRR. The helical transmembrane segment at 105–125 threads the bilayer; that stretch reads LSLLIIYNFFFLVSILTSITH. Topologically, residues 126–129 are extracellular; sequence HFHT. Residues 130 to 150 traverse the membrane as a helical segment; sequence ILFARLLSGFGIGLVTVSVPM. Residues 151–165 lie on the Cytoplasmic side of the membrane; it reads YISEMTHKDKKGAYG. The helical transmembrane segment at 166–186 threads the bilayer; the sequence is VMHQLFITFGIFVAVMLGLAM. Q169 is an alpha-D-glucose binding site. Beta-D-glucose is bound at residue Q169. Over 187 to 207 the chain is Extracellular; the sequence is GEGPKADSTEPLTSFAKLWWR. A helical membrane pass occupies residues 208-228; it reads LMFLFPSVISLIGILALVVFF. Over 229 to 293 the chain is Cytoplasmic; sequence KEETPYFLFE…SALKIPSYRY (65 aa). Residues 294–314 form a helical membrane-spanning segment; it reads VIILGCLLSGLQQFTGINVLV. Alpha-D-glucose is bound by residues Q305, Q306, and N311. Q305 is a beta-D-glucose binding site. N311 lines the beta-D-glucose pocket. The Extracellular portion of the chain corresponds to 315 to 331; sequence SNSNELYKEFLDSHLIT. The chain crosses the membrane as a helical span at residues 332–352; sequence ILSVVMTAVNFLMTFPAIYIV. N341 provides a ligand contact to beta-D-glucose. Over 353–358 the chain is Cytoplasmic; that stretch reads EKLGRK. A helical transmembrane segment spans residues 359-379; that stretch reads TLLLWGCVGVLVAYLPTAIAN. The Extracellular segment spans residues 380 to 392; that stretch reads EINRNSNFVKILS. Residues 393 to 413 traverse the membrane as a helical segment; sequence IVATFVMIISFAVSYGPVLWI. W412 is a binding site for alpha-D-glucose. The Cytoplasmic segment spans residues 414-429; the sequence is YLHEMFPSEIKDSAAS. A helical membrane pass occupies residues 430–450; sequence LASLVNWVCAIIVVFPSDIII. The Extracellular segment spans residues 451 to 455; that stretch reads KKSPS. The helical transmembrane segment at 456-476 threads the bilayer; sequence ILFIVFSVMSILTFFFIFFFI. The Cytoplasmic segment spans residues 477–504; that stretch reads KETKGGEIGTSPYITMEERQKHMTKSVV.

Belongs to the major facilitator superfamily. Sugar transporter (TC 2.A.1.1) family. In terms of assembly, homodimer.

Its subcellular location is the cell membrane. It carries out the reaction D-glucose(out) = D-glucose(in). It catalyses the reaction D-fructose(out) = D-fructose(in). The catalysed reaction is D-galactose(in) = D-galactose(out). The enzyme catalyses D-mannose(out) = D-mannose(in). It carries out the reaction D-glucosamine(out) = D-glucosamine(in). It catalyses the reaction D-xylose(out) = D-xylose(in). With respect to regulation, inhibited by cytochalasin B. Inhibited by compound 3361 (3-O-((undec-10-en)-1-yl)-D-glucose). Inhibited by compound HTI-1. In terms of biological role, sodium-independent facilitative hexose transporter. Can transport D-glucose and D-fructose. Can transport D-mannose, D-galactose, D-xylose and D-glucosamine. In Plasmodium falciparum (isolate 3D7), this protein is Hexose transporter 1.